A 38-amino-acid polypeptide reads, in one-letter code: uncharacterized protein (38 aa).

This is an uncharacterized protein from Saccharomyces cerevisiae (strain ATCC 204508 / S288c) (Baker's yeast).